Reading from the N-terminus, the 546-residue chain is Choline oxidase (546 aa).

FAD is bound by residues 23 to 24 (SA), glutamate 44, tryptophan 71, 90 to 92 (AKV), 96 to 103 (CSSHNSCI), alanine 232, and tyrosine 465. Histidine 99 carries the tele-8alpha-FAD histidine modification. Catalysis depends on histidine 466, which acts as the Proton acceptor. FAD is bound by residues alanine 500 and 510 to 512 (NPN).

This sequence belongs to the GMC oxidoreductase family. In terms of assembly, homodimer. FAD is required as a cofactor.

It carries out the reaction choline + 2 O2 + H2O = glycine betaine + 2 H2O2 + H(+). It participates in amine and polyamine biosynthesis; betaine biosynthesis via choline pathway; betaine from choline: step 1/1. Catalyzes the two-step oxidative conversion of choline to glycine-betaine with betaine aldehyde as an intermediate. Glycine-betaine accumulates to high levels in the cytoplasm of cells to prevent dehydration and plasmolysis in adverse hyperosmotic environments. Accepts either choline or the reaction intermediate betaine-aldehyde as substrate. The protein is Choline oxidase (codA) of Arthrobacter globiformis.